A 378-amino-acid chain; its full sequence is uncharacterized protein (378 aa).

The Guanylate cyclase domain maps to 208–317 (GIGFADLSSF…NPVNLAARLV (110 aa)).

It belongs to the adenylyl cyclase class-4/guanylyl cyclase family.

This is an uncharacterized protein from Mycobacterium bovis (strain ATCC BAA-935 / AF2122/97).